The chain runs to 196 residues: Ankyrin repeat domain-containing protein 66 (196 aa).

ANK repeat units follow at residues 7-37 (SDMT…DPNY), 43-72 (NDRT…RPCL), and 76-105 (VGWT…AIDA). Residues 152 to 196 (ERDEDWDAKKRELELSLPSLNQNMNKKNKKSRGPTRPSNTKGRRV) are disordered. Polar residues predominate over residues 187–196 (RPSNTKGRRV).

The polypeptide is Ankyrin repeat domain-containing protein 66 (ANKRD66) (Homo sapiens (Human)).